The following is a 557-amino-acid chain: Fatty acyl-CoA hydrolase precursor, medium chain (557 aa).

Residues 1–25 form the signal peptide; it reads MATEKNTLLSLILTAGITALVATGQ. Cysteine 93 and cysteine 122 are joined by a disulfide. Serine 227 (acyl-ester intermediate) is an active-site residue. Residues glutamate 345 and histidine 460 each act as charge relay system in the active site. Asparagine 476 carries an N-linked (GlcNAc...) asparagine glycan.

It belongs to the type-B carboxylesterase/lipase family. In terms of tissue distribution, highest levels in uropygial gland, much lower in liver and kidney.

Fatty acid biosynthesis chain termination and release of the free fatty acid product is achieved by hydrolysis of the thio ester by a thioesterase. This thioesterase may be associated with peroxisome proliferation and may play a role in the production of 3-hydroxy fatty acid diester pheromones. The polypeptide is Fatty acyl-CoA hydrolase precursor, medium chain (Anas platyrhynchos (Mallard)).